The chain runs to 541 residues: Tripeptidyl aminopeptidase (541 aa).

The N-terminal stretch at 1–36 is a signal peptide; it reads MRKSSIRRRATAFGTAGALVTATLIAGAVSAPAASA. A propeptide spanning residues 37–39 is cleaved from the precursor; the sequence is APA. The region spanning 123–501 is the AB hydrolase-1 domain; sequence GALIYNPGGP…SRLITERDAG (379 aa). The active-site Nucleophile is the S249. Residue D474 is part of the active site. Catalysis depends on H503, which acts as the Proton donor.

The protein belongs to the peptidase S33 family.

The protein localises to the secreted. Functionally, cleaves tripeptides from the N-termini of proteins. Does not cleave mono- or dipeptides, or N-terminally blocked peptides. This is Tripeptidyl aminopeptidase from Streptomyces coelicolor (strain ATCC BAA-471 / A3(2) / M145).